A 500-amino-acid chain; its full sequence is Na(+)/H(+) antiporter NhaB (500 aa).

12 consecutive transmembrane segments (helical) span residues phenylalanine 28 to glycine 50, glycine 68 to alanine 88, leucine 98 to phenylalanine 118, leucine 121 to leucine 141, phenylalanine 145 to valine 165, leucine 205 to proline 225, glutamine 244 to glutamate 264, alanine 301 to leucine 318, phenylalanine 350 to isoleucine 370, methionine 394 to isoleucine 414, valine 449 to leucine 469, and methionine 477 to serine 497.

Belongs to the NhaB Na(+)/H(+) (TC 2.A.34) antiporter family.

The protein resides in the cell inner membrane. The catalysed reaction is 2 Na(+)(in) + 3 H(+)(out) = 2 Na(+)(out) + 3 H(+)(in). Functionally, na(+)/H(+) antiporter that extrudes sodium in exchange for external protons. The protein is Na(+)/H(+) antiporter NhaB of Pseudomonas paraeruginosa (strain DSM 24068 / PA7) (Pseudomonas aeruginosa (strain PA7)).